A 931-amino-acid polypeptide reads, in one-letter code: MMDDTAMPARAEADAAEDELAAPAGIDRTAKADKDANRVSPMMAQYVEIKAANPGSLLFYRMGDFYELFFEDAEIASQALGIVLTKRGKHLGEDIPMCGVPLTRSEEYLHKLIALGHRVAVCDQLEDPAEAKKRGSKSVVKRDVIRLVTPGTITEDSLLDAKRENVLLAVARTRASGEGAYDYALAFTDVSTGSFRVVASDGDMLAADLARIDPAEILVSDAVYDDEELRDFWRGLSTPVTPLPKQSFDGPQAEKRLAAFFGVATADSFGSFARAELIAAAAVVAYIERTQLGARPALAPPQREADGGSMLIDAGTRVNLELIRTTSGERRGSLLAAIDRTVTAAGARLLARRLAEPLTDIAAIRARHDAVGFLVEETELREALRKRLAAAPDLARALSRISLGRGSPRDLGAIAAGLKEGLAISSAFGPETPRDIARCARLLAAVEPWLAEELTAALADELPLNRRDGGFVRQGYDLDLDSTRALRDESRRVVAALERRYVDETGIKSLKIRHNAVLGYFVEVTAQNADRLREAPFNATFVHRQTMAGAVRFTSVELGDLESRIASAGERALALEQTIFDRLAAAVIEASRPIREAAEALAELDVLTALARLAVDERYVRPEMTEGVDFAISGGRHPVVEQALARGGGPFVANDCDLSPPETAQDARIWLVTGPNMAGKSTFLRQNALIAVLAQAGAFVPARAARLGVVDRLFSRVGAADDLARGRSTFMVEMVETAAILNQATRRSLVILDEIGRGTSTFDGMSIAWASLEHLHEVNRCRALFATHFHELTALTQRCQRLANATVKVTEWQGDVVFLHEVIPGAADRSYGIQVAKLAGLPKMVIARAKAVLTELEAAERVSPAQRLLDELPLFAAAARPAPTLAAPTGPHPAEPVLEELDRLDPDALTPRAALDALYRLKAMLRDAADD.

Residues 1–10 are compositionally biased toward low complexity; sequence MMDDTAMPAR. The tract at residues 1–34 is disordered; the sequence is MMDDTAMPARAEADAAEDELAAPAGIDRTAKADK. 674-681 serves as a coordination point for ATP; that stretch reads GPNMAGKS.

It belongs to the DNA mismatch repair MutS family.

Functionally, this protein is involved in the repair of mismatches in DNA. It is possible that it carries out the mismatch recognition step. This protein has a weak ATPase activity. The sequence is that of DNA mismatch repair protein MutS from Azorhizobium caulinodans (strain ATCC 43989 / DSM 5975 / JCM 20966 / LMG 6465 / NBRC 14845 / NCIMB 13405 / ORS 571).